The chain runs to 249 residues: 5-amino-6-(5-phospho-D-ribitylamino)uracil phosphatase YcsE (249 aa).

Asp16 (nucleophile) is an active-site residue. Asp16 is a Mg(2+) binding site. Residue Met17 coordinates phosphate. A Mg(2+)-binding site is contributed by Asp18. Phosphate is bound by residues 50–51 (TG) and Lys177. Mg(2+) contacts are provided by Asp200 and Ser201. Asn203 contributes to the phosphate binding site.

The protein belongs to the HAD-like hydrolase superfamily. Cof family. Mg(2+) is required as a cofactor.

The catalysed reaction is 5-amino-6-(5-phospho-D-ribitylamino)uracil + H2O = 5-amino-6-(D-ribitylamino)uracil + phosphate. It functions in the pathway cofactor biosynthesis; riboflavin biosynthesis; 5-amino-6-(D-ribitylamino)uracil from GTP: step 4/4. Catalyzes the dephosphorylation of the riboflavin precursor 5-amino-6-(5-phospho-D-ribitylamino)uracil and of flavin mononucleotide (FMN) in vitro. To a lesser extent, may also catalyze the dephosphorylation of a broad range of substrates such as phosphorylated sugars and triphosphate nucleotides in vitro. The chain is 5-amino-6-(5-phospho-D-ribitylamino)uracil phosphatase YcsE (ycsE) from Bacillus subtilis (strain 168).